The chain runs to 714 residues: Polyribonucleotide nucleotidyltransferase (714 aa).

Asp487 and Asp493 together coordinate Mg(2+). One can recognise a KH domain in the interval 554–613 (PRIEVMTIPVDKIREVIGSGGKVIREIVEKTGAKINIEDDGTIKIASASGKEIEAARKWI). Residues 623 to 691 (GVVYEGTVVK…ERGKVRLSMK (69 aa)) form the S1 motif domain.

Belongs to the polyribonucleotide nucleotidyltransferase family. Mg(2+) serves as cofactor.

Its subcellular location is the cytoplasm. The enzyme catalyses RNA(n+1) + phosphate = RNA(n) + a ribonucleoside 5'-diphosphate. Its function is as follows. Involved in mRNA degradation. Catalyzes the phosphorolysis of single-stranded polyribonucleotides processively in the 3'- to 5'-direction. The sequence is that of Polyribonucleotide nucleotidyltransferase from Allorhizobium ampelinum (strain ATCC BAA-846 / DSM 112012 / S4) (Agrobacterium vitis (strain S4)).